Here is an 800-residue protein sequence, read N- to C-terminus: Nucleolar complex protein 3 homolog (800 aa).

Disordered stretches follow at residues 27-93 (KLKN…DMMD) and 160-187 (GIIPQTREKPVTDSNKDEEDQEEERELE). A compositionally biased stretch (basic residues) spans 40–51 (KKYRKEQRKLRQ). The span at 66-78 (NPKEKRPGKRIER) shows a compositional bias: basic and acidic residues. Acidic residues predominate over residues 79-93 (EEEEEEEALPLDMMD). Residues 160-174 (GIIPQTREKPVTDSN) are compositionally biased toward basic and acidic residues. A compositionally biased stretch (acidic residues) spans 175–187 (KDEEDQEEERELE). Lys-333 is covalently cross-linked (Glycyl lysine isopeptide (Lys-Gly) (interchain with G-Cter in SUMO2)). Residues 451 to 490 (KEKRKSLSRMQRKWKKAEEKLERELREAEASESTEKKLKL) are a coiled coil. Phosphoserine is present on Ser-787.

This sequence belongs to the CBF/MAK21 family. Expressed in colon, heart, kidney, liver, lung, placenta, skeletal muscle, small intestine, spleen and thymus.

Its subcellular location is the nucleus. The protein localises to the nucleolus. It localises to the nucleus speckle. Functionally, may be required for adipogenesis. The polypeptide is Nucleolar complex protein 3 homolog (NOC3L) (Homo sapiens (Human)).